A 228-amino-acid polypeptide reads, in one-letter code: Aldehyde dehydrogenase 9 (228 aa).

76–81 (GSTETA) contacts NAD(+). Catalysis depends on residues E99 and C132.

Belongs to the aldehyde dehydrogenase family.

It carries out the reaction an aldehyde + NAD(+) + H2O = a carboxylate + NADH + 2 H(+). It participates in alcohol metabolism; ethanol degradation; acetate from ethanol: step 2/2. The polypeptide is Aldehyde dehydrogenase 9 (ALDH9) (Polyandrocarpa misakiensis (Tunicate)).